The following is a 59-amino-acid chain: Large ribosomal subunit protein bL32 (59 aa).

A disordered region spans residues Glu-35–Asp-59. Basic residues predominate over residues Arg-49–Asp-59.

The protein belongs to the bacterial ribosomal protein bL32 family.

This is Large ribosomal subunit protein bL32 from Polynucleobacter asymbioticus (strain DSM 18221 / CIP 109841 / QLW-P1DMWA-1) (Polynucleobacter necessarius subsp. asymbioticus).